Reading from the N-terminus, the 190-residue chain is Xanthine phosphoribosyltransferase (190 aa).

Xanthine-binding residues include Leu20 and Asn27. 128–132 (ANGKA) is a 5-phospho-alpha-D-ribose 1-diphosphate binding site. Xanthine is bound at residue Lys156.

Belongs to the purine/pyrimidine phosphoribosyltransferase family. Xpt subfamily. As to quaternary structure, homodimer.

Its subcellular location is the cytoplasm. The catalysed reaction is XMP + diphosphate = xanthine + 5-phospho-alpha-D-ribose 1-diphosphate. It functions in the pathway purine metabolism; XMP biosynthesis via salvage pathway; XMP from xanthine: step 1/1. Its function is as follows. Converts the preformed base xanthine, a product of nucleic acid breakdown, to xanthosine 5'-monophosphate (XMP), so it can be reused for RNA or DNA synthesis. The sequence is that of Xanthine phosphoribosyltransferase from Pseudomonas fluorescens (strain ATCC BAA-477 / NRRL B-23932 / Pf-5).